Reading from the N-terminus, the 526-residue chain is GMP synthase [glutamine-hydrolyzing] (526 aa).

Residues 4 to 202 (KILILDFGSQ…VHDICGCDQS (199 aa)) enclose the Glutamine amidotransferase type-1 domain. Cysteine 81 (nucleophile) is an active-site residue. Catalysis depends on residues histidine 176 and glutamate 178. Positions 203–395 (WNMPDYVETA…LGLPHDMVYR (193 aa)) constitute a GMPS ATP-PPase domain. 230–236 (SGGVDSS) contacts ATP.

Homodimer.

The enzyme catalyses XMP + L-glutamine + ATP + H2O = GMP + L-glutamate + AMP + diphosphate + 2 H(+). The protein operates within purine metabolism; GMP biosynthesis; GMP from XMP (L-Gln route): step 1/1. In terms of biological role, catalyzes the synthesis of GMP from XMP. This Methylobacillus flagellatus (strain ATCC 51484 / DSM 6875 / VKM B-1610 / KT) protein is GMP synthase [glutamine-hydrolyzing].